Reading from the N-terminus, the 163-residue chain is Aspartate 1-decarboxylase (163 aa).

Serine 25 acts as the Schiff-base intermediate with substrate; via pyruvic acid in catalysis. Residue serine 25 is modified to Pyruvic acid (Ser). Residue threonine 57 coordinates substrate. The Proton donor role is filled by tyrosine 58. 73–75 (GAA) contacts substrate.

Belongs to the PanD family. Heterooctamer of four alpha and four beta subunits. Requires pyruvate as cofactor. Is synthesized initially as an inactive proenzyme, which is activated by self-cleavage at a specific serine bond to produce a beta-subunit with a hydroxyl group at its C-terminus and an alpha-subunit with a pyruvoyl group at its N-terminus.

It is found in the cytoplasm. It catalyses the reaction L-aspartate + H(+) = beta-alanine + CO2. It participates in cofactor biosynthesis; (R)-pantothenate biosynthesis; beta-alanine from L-aspartate: step 1/1. Catalyzes the pyruvoyl-dependent decarboxylation of aspartate to produce beta-alanine. This chain is Aspartate 1-decarboxylase, found in Saccharopolyspora erythraea (strain ATCC 11635 / DSM 40517 / JCM 4748 / NBRC 13426 / NCIMB 8594 / NRRL 2338).